We begin with the raw amino-acid sequence, 67 residues long: DNA-directed RNA polymerase subunit omega (67 aa).

Belongs to the RNA polymerase subunit omega family. The RNAP catalytic core consists of 2 alpha, 1 beta, 1 beta' and 1 omega subunit. When a sigma factor is associated with the core the holoenzyme is formed, which can initiate transcription.

It catalyses the reaction RNA(n) + a ribonucleoside 5'-triphosphate = RNA(n+1) + diphosphate. Its function is as follows. Promotes RNA polymerase assembly. Latches the N- and C-terminal regions of the beta' subunit thereby facilitating its interaction with the beta and alpha subunits. This Methylibium petroleiphilum (strain ATCC BAA-1232 / LMG 22953 / PM1) protein is DNA-directed RNA polymerase subunit omega.